The chain runs to 153 residues: Arginine regulator (153 aa).

Belongs to the ArgR family.

The protein localises to the cytoplasm. It participates in amino-acid degradation; L-arginine degradation via ADI pathway. Functionally, regulates the transcription of the arc operon, involved in arginine catabolism. The polypeptide is Arginine regulator (argR1) (Lactiplantibacillus plantarum (strain ATCC BAA-793 / NCIMB 8826 / WCFS1) (Lactobacillus plantarum)).